The chain runs to 415 residues: DNA double-strand break repair protein Mre11 (415 aa).

Mn(2+) contacts are provided by Asp-10, His-12, Asp-51, and Asn-86. His-87 acts as the Proton donor in catalysis. His-174, His-208, and His-210 together coordinate Mn(2+).

It belongs to the MRE11/RAD32 family. Homodimer. Forms a heterotetramer composed of two Mre11 subunits and two Rad50 subunits. Mn(2+) is required as a cofactor.

Nuclease activity is regulated by Rad50. Its function is as follows. Part of the Rad50/Mre11 complex, which is involved in the early steps of DNA double-strand break (DSB) repair. The complex may facilitate opening of the processed DNA ends to aid in the recruitment of HerA and NurA. Mre11 binds to DSB ends and has both double-stranded 3'-5' exonuclease activity and single-stranded endonuclease activity. The chain is DNA double-strand break repair protein Mre11 from Pyrococcus abyssi (strain GE5 / Orsay).